Consider the following 145-residue polypeptide: Large ribosomal subunit protein bL19 (145 aa).

Belongs to the bacterial ribosomal protein bL19 family.

Its function is as follows. This protein is located at the 30S-50S ribosomal subunit interface and may play a role in the structure and function of the aminoacyl-tRNA binding site. This chain is Large ribosomal subunit protein bL19, found in Brachyspira hyodysenteriae (strain ATCC 49526 / WA1).